The primary structure comprises 344 residues: uncharacterized protein (344 aa).

Basic and acidic residues predominate over residues 323–332; sequence KQQEQREQGR. Residues 323 to 344 are disordered; sequence KQQEQREQGRRAAYLQQRGMER.

This is an uncharacterized protein from Bacillus anthracis.